Here is a 1430-residue protein sequence, read N- to C-terminus: DNA-directed RNA polymerase subunit beta' (1430 aa).

4 residues coordinate Zn(2+): C71, C73, C86, and C89. Residues D461, D463, and D465 each coordinate Mg(2+). Residues C815, C889, C896, and C899 each coordinate Zn(2+). A disordered region spans residues 1388–1430 (RRQEAPAPAATPEQQAEEVFASLGQGEGEGPSPSDEASGPEVE). Residues 1392–1405 (APAPAATPEQQAEE) show a composition bias toward low complexity.

It belongs to the RNA polymerase beta' chain family. The RNAP catalytic core consists of 2 alpha, 1 beta, 1 beta' and 1 omega subunit. When a sigma factor is associated with the core the holoenzyme is formed, which can initiate transcription. The cofactor is Mg(2+). Requires Zn(2+) as cofactor.

It catalyses the reaction RNA(n) + a ribonucleoside 5'-triphosphate = RNA(n+1) + diphosphate. In terms of biological role, DNA-dependent RNA polymerase catalyzes the transcription of DNA into RNA using the four ribonucleoside triphosphates as substrates. This chain is DNA-directed RNA polymerase subunit beta', found in Halorhodospira halophila (strain DSM 244 / SL1) (Ectothiorhodospira halophila (strain DSM 244 / SL1)).